We begin with the raw amino-acid sequence, 443 residues long: Serine/threonine-protein phosphatase 2A 55 kDa regulatory subunit B beta isoform (443 aa).

4 WD repeats span residues 22 to 61 (TEADIISTVEFNHTGELLATGDKGGRVVIFQREQESKNQV), 87 to 128 (EIEE…KRPE), 171 to 209 (AHTYHINSISVNSDYETYMSADDLRINLWNFEITNQSFN), and 220 to 260 (ELTE…LCDR). Ser-275 carries the post-translational modification Phosphoserine. WD repeat units lie at residues 279–317 (EIISSISDVKFSHSGRYIMTRDYLTAKVWDLNMENRPVE), 334–375 (ENDC…DVTL), and 410–442 (DFSKKILHTAWHPSENIIAVAATNNLYIFQDKV). Residue Tyr-295 is modified to Phosphotyrosine. A Phosphothreonine modification is found at Thr-298.

It belongs to the phosphatase 2A regulatory subunit B family. As to quaternary structure, PP2A consists of a common heterodimeric core enzyme, composed of a 36 kDa catalytic subunit (subunit C) and a 65 kDa constant regulatory subunit (PR65 or subunit A), that associates with a variety of regulatory subunits. Proteins that associate with the core dimer include three families of regulatory subunits B (the R2/B/PR55/B55, R3/B''/PR72/PR130/PR59 and R5/B'/B56 families), the 48 kDa variable regulatory subunit, viral proteins, and cell signaling molecules. Interacts with IER5 (via N- and C-terminal regions). Interacts with TOMM22. As to expression, expressed in the brain. Isoform 1 and isoform 2 are expressed in the forbrain. Isoform 1 is more strongly expressed than isoform 2 in the olfactory bulb. Isoform 1 and isoform 2 are weakly expressed in the cerebellum. Isoform 1 is expressed in the testis. Isoform 2 expression is undetectable at birth rising to adult level at day 14.

The protein resides in the cytoplasm. The protein localises to the cytoskeleton. It is found in the membrane. Its subcellular location is the mitochondrion. It localises to the mitochondrion outer membrane. Its function is as follows. The B regulatory subunit might modulate substrate selectivity and catalytic activity, and might also direct the localization of the catalytic enzyme to a particular subcellular compartment. Within the PP2A holoenzyme complex, isoform 2 is required to promote proapoptotic activity. Isoform 2 regulates neuronal survival through the mitochondrial fission and fusion balance. The sequence is that of Serine/threonine-protein phosphatase 2A 55 kDa regulatory subunit B beta isoform (Ppp2r2b) from Rattus norvegicus (Rat).